The sequence spans 206 residues: Octanoyltransferase (206 aa).

The BPL/LPL catalytic domain maps to 30–206; it reads PETNDEIWLV…EFVTLLNNSI (177 aa). Substrate-binding positions include 69–76, 137–139, and 150–152; these read RGGQVTYH, SLG, and GIA. The active-site Acyl-thioester intermediate is the Cys168.

This sequence belongs to the LipB family.

Its subcellular location is the cytoplasm. The enzyme catalyses octanoyl-[ACP] + L-lysyl-[protein] = N(6)-octanoyl-L-lysyl-[protein] + holo-[ACP] + H(+). It participates in protein modification; protein lipoylation via endogenous pathway; protein N(6)-(lipoyl)lysine from octanoyl-[acyl-carrier-protein]: step 1/2. Its function is as follows. Catalyzes the transfer of endogenously produced octanoic acid from octanoyl-acyl-carrier-protein onto the lipoyl domains of lipoate-dependent enzymes. Lipoyl-ACP can also act as a substrate although octanoyl-ACP is likely to be the physiological substrate. The sequence is that of Octanoyltransferase from Francisella tularensis subsp. holarctica (strain FTNF002-00 / FTA).